The following is a 343-amino-acid chain: Tribbles homolog 2 (343 aa).

A disordered region spans residues 25 to 50; that stretch reads EELSSIRSAEPSQSFSPNLGSPSPPE. Polar residues predominate over residues 29 to 45; sequence SIRSAEPSQSFSPNLGS. One can recognise a Protein kinase domain in the interval 61–308; sequence IGKYLLLEPL…SQEILDHPWF (248 aa).

This sequence belongs to the protein kinase superfamily. CAMK Ser/Thr protein kinase family. Tribbles subfamily. As to expression, highly expressed in the thyroid, also present in ovary and cerebrum.

The protein localises to the cytoplasm. The protein resides in the cytoskeleton. Its function is as follows. Interacts with MAPK kinases and regulates activation of MAP kinases. Does not display kinase activity. This is Tribbles homolog 2 from Canis lupus familiaris (Dog).